We begin with the raw amino-acid sequence, 355 residues long: Guanine nucleotide-binding protein subunit alpha-14 (355 aa).

One can recognise a G-alpha domain in the interval 34–355 (RELKLLLLGT…QLNLREFNLV (322 aa)). Residues 37 to 50 (KLLLLGTGESGKST) form a G1 motif region. GTP is bound by residues 42–49 (GTGESGKS), 176–182 (LRVRVPT), 201–205 (DVGGQ), 270–273 (NKKD), and Ala-327. Residue Ser-49 coordinates Mg(2+). A G2 motif region spans residues 174 to 182 (DVLRVRVPT). ADP-ribosylarginine; by cholera toxin is present on Arg-179. Thr-182 lines the Mg(2+) pocket. Residues 197 to 206 (FRMVDVGGQR) form a G3 motif region. The G4 motif stretch occupies residues 266-273 (ILFLNKKD). The segment at 325 to 330 (TCATDT) is G5 motif.

It belongs to the G-alpha family. G(q) subfamily. In terms of assembly, g proteins are composed of 3 units; alpha, beta and gamma. The alpha chain contains the guanine nucleotide binding site.

Its function is as follows. Guanine nucleotide-binding proteins (G proteins) are involved as modulators or transducers in various transmembrane signaling systems. The chain is Guanine nucleotide-binding protein subunit alpha-14 (GNA14) from Homo sapiens (Human).